Here is a 122-residue protein sequence, read N- to C-terminus: Large ribosomal subunit protein uL14 (122 aa).

It belongs to the universal ribosomal protein uL14 family. Part of the 50S ribosomal subunit. Forms a cluster with proteins L3 and L19. In the 70S ribosome, L14 and L19 interact and together make contacts with the 16S rRNA in bridges B5 and B8.

Functionally, binds to 23S rRNA. Forms part of two intersubunit bridges in the 70S ribosome. The sequence is that of Large ribosomal subunit protein uL14 from Brucella abortus (strain 2308).